Here is a 274-residue protein sequence, read N- to C-terminus: Dermonecrotic toxin LspiSicTox-betaIII2 (274 aa).

H5 is a catalytic residue. The Mg(2+) site is built by E25 and D27. H41 serves as the catalytic Nucleophile. 2 disulfide bridges follow: C45/C51 and C47/C189. Residue D85 coordinates Mg(2+).

The protein belongs to the arthropod phospholipase D family. Class II subfamily. Mg(2+) serves as cofactor. Expressed by the venom gland.

The protein localises to the secreted. The catalysed reaction is an N-(acyl)-sphingosylphosphocholine = an N-(acyl)-sphingosyl-1,3-cyclic phosphate + choline. It carries out the reaction an N-(acyl)-sphingosylphosphoethanolamine = an N-(acyl)-sphingosyl-1,3-cyclic phosphate + ethanolamine. It catalyses the reaction a 1-acyl-sn-glycero-3-phosphocholine = a 1-acyl-sn-glycero-2,3-cyclic phosphate + choline. The enzyme catalyses a 1-acyl-sn-glycero-3-phosphoethanolamine = a 1-acyl-sn-glycero-2,3-cyclic phosphate + ethanolamine. Its function is as follows. Dermonecrotic toxins cleave the phosphodiester linkage between the phosphate and headgroup of certain phospholipids (sphingolipid and lysolipid substrates), forming an alcohol (often choline) and a cyclic phosphate. This toxin acts on sphingomyelin (SM). It may also act on ceramide phosphoethanolamine (CPE), lysophosphatidylcholine (LPC) and lysophosphatidylethanolamine (LPE), but not on lysophosphatidylserine (LPS), and lysophosphatidylglycerol (LPG). It acts by transphosphatidylation, releasing exclusively cyclic phosphate products as second products. Induces dermonecrosis, hemolysis, increased vascular permeability, edema, inflammatory response, and platelet aggregation. This Loxosceles spinulosa (Recluse spider) protein is Dermonecrotic toxin LspiSicTox-betaIII2.